A 60-amino-acid chain; its full sequence is UPF0434 protein YE1549 (60 aa).

It belongs to the UPF0434 family.

In Yersinia enterocolitica serotype O:8 / biotype 1B (strain NCTC 13174 / 8081), this protein is UPF0434 protein YE1549.